The sequence spans 324 residues: Fructose-1,6-bisphosphatase class 1 (324 aa).

Glu-88, Asp-107, Leu-109, and Asp-110 together coordinate Mg(2+). Residues 110-113, Asn-199, and Lys-265 contribute to the substrate site; that span reads DGSS. Glu-271 provides a ligand contact to Mg(2+).

The protein belongs to the FBPase class 1 family. In terms of assembly, homotetramer. The cofactor is Mg(2+).

Its subcellular location is the cytoplasm. The catalysed reaction is beta-D-fructose 1,6-bisphosphate + H2O = beta-D-fructose 6-phosphate + phosphate. It participates in carbohydrate biosynthesis; gluconeogenesis. This is Fructose-1,6-bisphosphatase class 1 from Neisseria meningitidis serogroup B (strain ATCC BAA-335 / MC58).